Reading from the N-terminus, the 203-residue chain is Nudix hydrolase 12, mitochondrial (203 aa).

A Nudix hydrolase domain is found at 18–166; sequence NFRLVSGCIP…WMQRALEEFL (149 aa). A Nudix box motif is present at residues 66 to 87; that stretch reads GGWEDDETVLEAASREAIEEAG. Positions 81 and 85 each coordinate Mg(2+).

Belongs to the Nudix hydrolase family. It depends on Mg(2+) as a cofactor. The cofactor is Mn(2+). As to expression, expressed in roots, leaves, stems and inflorescences.

The protein localises to the mitochondrion. In terms of biological role, probably mediates the hydrolysis of some nucleoside diphosphate derivatives. In Arabidopsis thaliana (Mouse-ear cress), this protein is Nudix hydrolase 12, mitochondrial (NUDT12).